We begin with the raw amino-acid sequence, 73 residues long: MKIQVKVKPNAKHQKIEEAEDGSLIISLKSPPVEGKANQELIKLLAQKYRVTKSQISIQSGLSSRNKLIEILD.

This sequence belongs to the UPF0235 family.

This chain is UPF0235 protein PCC7424_0673, found in Gloeothece citriformis (strain PCC 7424) (Cyanothece sp. (strain PCC 7424)).